The chain runs to 186 residues: Lipid A acyltransferase PagP (186 aa).

Residues 1-19 (MKRLISCLTIICALNRSAA) form the signal peptide. Residues histidine 60, aspartate 103, and serine 104 contribute to the active site.

The protein belongs to the lipid A palmitoyltransferase family. Homodimer.

The protein localises to the cell outer membrane. It catalyses the reaction a lipid A + a 1,2-diacyl-sn-glycero-3-phosphocholine = a hepta-acyl lipid A + a 2-acyl-sn-glycero-3-phosphocholine. The catalysed reaction is a lipid IVA + a 1,2-diacyl-sn-glycero-3-phosphocholine = a lipid IVB + a 2-acyl-sn-glycero-3-phosphocholine. It carries out the reaction a lipid IIA + a 1,2-diacyl-sn-glycero-3-phosphocholine = a lipid IIB + a 2-acyl-sn-glycero-3-phosphocholine. Transfers a fatty acid residue from the sn-1 position of a phospholipid to the N-linked hydroxyfatty acid chain on the proximal unit of lipid A or its precursors. Confers resistance to cationic antimicrobial peptides (CAMPs). Promotes the ability of L.pneumophila to replicate and/or survive in macrophages. Important for ability to kill macrophages and to promote the virulence. In Legionella pneumophila, this protein is Lipid A acyltransferase PagP.